A 360-amino-acid chain; its full sequence is MSGRPNSRGSSRLFRAPSEDASSGSSGSAVLPQEENPNASGLTRSWKAVMGMVFILTLLLLGFINHMKLKEKAFPQKSRQIYAVIAEYGSRLYNYQARLRMPKEQLELLKKESQTLENNFREILFLIEQIDVLKALLRDMQDGLHNYSWNADIDPAEGWNHTEVIDEEMSNLVNYILKKLREDQVQMADYALKSAGASVVEAGTSESYKNNKAKLYWHGIGFLNYEMPPDIILQPDVHPGKCWAFPGSQGHALIKLARKIIPTAVTMEHISEKVSPSGNISSAPKEFSVYGVLKQCEGEEIFLGQFVYNKTGTTVQTFALQHEVPEFLLCVKLKILSNWGHPNYTCLYRFRVHGTPKDDS.

A compositionally biased stretch (polar residues) spans 1–10 (MSGRPNSRGS). A disordered region spans residues 1–39 (MSGRPNSRGSSRLFRAPSEDASSGSSGSAVLPQEENPNA). Topologically, residues 1–47 (MSGRPNSRGSSRLFRAPSEDASSGSSGSAVLPQEENPNASGLTRSWK) are nuclear. The chain crosses the membrane as a helical span at residues 48–67 (AVMGMVFILTLLLLGFINHM). The Perinuclear space segment spans residues 68-360 (KLKEKAFPQK…RVHGTPKDDS (293 aa)). A coiled-coil region spans residues 103–142 (KEQLELLKKESQTLENNFREILFLIEQIDVLKALLRDMQD). In terms of domain architecture, SUN spans 196 to 357 (GASVVEAGTS…YRFRVHGTPK (162 aa)).

Self-associates. Interacts with SYNE1 and SPAG4/SUN4. Proposed to form a spermatogenesis-specific LINC complex with SYNE1 during sperm head formation possibly implicating a SUN domain-based heterotrimer with SPAG4/SUN4 associating with SYNE1.

The protein localises to the membrane. It is found in the nucleus envelope. It localises to the nucleus inner membrane. In terms of biological role, as a probable component of the LINC (LInker of Nucleoskeleton and Cytoskeleton) complex, involved in the connection between the nuclear lamina and the cytoskeleton. The nucleocytoplasmic interactions established by the LINC complex play an important role in the transmission of mechanical forces across the nuclear envelope and in nuclear movement and positioning. May be involved in nuclear remodeling during sperm head formation in spermatogenesis. A probable SUN3:SYNE1 LINC complex may tether spermatid nuclei to posterior cytoskeletal structures such as the manchette. The chain is SUN domain-containing protein 3 (SUN3) from Bos taurus (Bovine).